The primary structure comprises 213 residues: MKKLLYISVNTKPEEMSSSKTVARKLINSILEKHPSMALEEVDLYREHIPQLKYSYFESRSAIVNSEALAKLPQDEQNEVTQIIKLCDQFRAADIYIIASPMWSLSFPAPLKEYIDCVVQSGKTIAFDENKPYGLLNDKERTFIYVQSSGANIPWIIRPALNKGLNYVHDIIRFLGISKFEELLVDGTGTTELERQEAIEKAASRIETLVDQI.

Position 17–19 (17–19) interacts with FMN; that stretch reads SSS.

Belongs to the azoreductase type 1 family. As to quaternary structure, homodimer. The cofactor is FMN.

The catalysed reaction is 2 a quinone + NADH + H(+) = 2 a 1,4-benzosemiquinone + NAD(+). It carries out the reaction N,N-dimethyl-1,4-phenylenediamine + anthranilate + 2 NAD(+) = 2-(4-dimethylaminophenyl)diazenylbenzoate + 2 NADH + 2 H(+). Functionally, quinone reductase that provides resistance to thiol-specific stress caused by electrophilic quinones. In terms of biological role, also exhibits azoreductase activity. Catalyzes the reductive cleavage of the azo bond in aromatic azo compounds to the corresponding amines. The polypeptide is FMN-dependent NADH:quinone oxidoreductase (Ruminiclostridium cellulolyticum (strain ATCC 35319 / DSM 5812 / JCM 6584 / H10) (Clostridium cellulolyticum)).